Here is a 116-residue protein sequence, read N- to C-terminus: UPF0342 protein BH1149 (116 aa).

The protein belongs to the UPF0342 family.

In Halalkalibacterium halodurans (strain ATCC BAA-125 / DSM 18197 / FERM 7344 / JCM 9153 / C-125) (Bacillus halodurans), this protein is UPF0342 protein BH1149.